The sequence spans 248 residues: tRNA pseudouridine synthase A (248 aa).

Aspartate 53 functions as the Nucleophile in the catalytic mechanism. Residue tyrosine 111 coordinates substrate.

Belongs to the tRNA pseudouridine synthase TruA family. In terms of assembly, homodimer.

It catalyses the reaction uridine(38/39/40) in tRNA = pseudouridine(38/39/40) in tRNA. Its function is as follows. Formation of pseudouridine at positions 38, 39 and 40 in the anticodon stem and loop of transfer RNAs. The sequence is that of tRNA pseudouridine synthase A from Listeria innocua serovar 6a (strain ATCC BAA-680 / CLIP 11262).